The sequence spans 358 residues: UDP-N-acetylglucosamine--N-acetylmuramyl-(pentapeptide) pyrophosphoryl-undecaprenol N-acetylglucosamine transferase (358 aa).

Residues 12 to 14, Asn-124, Arg-162, Ser-185, Ile-242, 261 to 266, and Gln-287 each bind UDP-N-acetyl-alpha-D-glucosamine; these read TGG and ALTVSE.

It belongs to the glycosyltransferase 28 family. MurG subfamily.

The protein localises to the cell inner membrane. It catalyses the reaction di-trans,octa-cis-undecaprenyl diphospho-N-acetyl-alpha-D-muramoyl-L-alanyl-D-glutamyl-meso-2,6-diaminopimeloyl-D-alanyl-D-alanine + UDP-N-acetyl-alpha-D-glucosamine = di-trans,octa-cis-undecaprenyl diphospho-[N-acetyl-alpha-D-glucosaminyl-(1-&gt;4)]-N-acetyl-alpha-D-muramoyl-L-alanyl-D-glutamyl-meso-2,6-diaminopimeloyl-D-alanyl-D-alanine + UDP + H(+). The protein operates within cell wall biogenesis; peptidoglycan biosynthesis. Functionally, cell wall formation. Catalyzes the transfer of a GlcNAc subunit on undecaprenyl-pyrophosphoryl-MurNAc-pentapeptide (lipid intermediate I) to form undecaprenyl-pyrophosphoryl-MurNAc-(pentapeptide)GlcNAc (lipid intermediate II). In Pseudoalteromonas translucida (strain TAC 125), this protein is UDP-N-acetylglucosamine--N-acetylmuramyl-(pentapeptide) pyrophosphoryl-undecaprenol N-acetylglucosamine transferase.